Reading from the N-terminus, the 166-residue chain is Large ribosomal subunit protein uL10 (166 aa).

Belongs to the universal ribosomal protein uL10 family. Part of the ribosomal stalk of the 50S ribosomal subunit. The N-terminus interacts with L11 and the large rRNA to form the base of the stalk. The C-terminus forms an elongated spine to which L12 dimers bind in a sequential fashion forming a multimeric L10(L12)X complex.

Forms part of the ribosomal stalk, playing a central role in the interaction of the ribosome with GTP-bound translation factors. This is Large ribosomal subunit protein uL10 from Geobacillus sp. (strain WCH70).